A 394-amino-acid chain; its full sequence is Na(+)/H(+) antiporter NhaA (394 aa).

Helical transmembrane passes span 14–34 (AGGL…NSAL), 59–79 (LLLW…GLEV), 95–115 (VFPA…YLLF), 125–145 (GWAI…ALLG), 154–174 (VFLL…IALF), 179–199 (VSLQ…YMNW), 213–233 (LVLW…GVIV), 254–274 (GLHP…NAGV), 292–312 (IATG…WLAV), 328–348 (IFAV…IASL), and 363–383 (LGIL…LRLV).

This sequence belongs to the NhaA Na(+)/H(+) (TC 2.A.33) antiporter family.

The protein localises to the cell inner membrane. It catalyses the reaction Na(+)(in) + 2 H(+)(out) = Na(+)(out) + 2 H(+)(in). Na(+)/H(+) antiporter that extrudes sodium in exchange for external protons. This chain is Na(+)/H(+) antiporter NhaA, found in Yersinia pseudotuberculosis serotype O:1b (strain IP 31758).